The following is a 396-amino-acid chain: 1-deoxy-D-xylulose 5-phosphate reductoisomerase (396 aa).

NADPH contacts are provided by Thr15, Gly16, Ser17, Ile18, Gly41, and Asn130. Residue Lys131 participates in 1-deoxy-D-xylulose 5-phosphate binding. Residue Glu132 participates in NADPH binding. Position 155 (Asp155) interacts with Mn(2+). Residues Ser156, Glu157, Ser181, and His204 each coordinate 1-deoxy-D-xylulose 5-phosphate. Glu157 lines the Mn(2+) pocket. Gly210 serves as a coordination point for NADPH. 1-deoxy-D-xylulose 5-phosphate-binding residues include Ser217, Asn222, Lys223, and Glu226. Position 226 (Glu226) interacts with Mn(2+).

This sequence belongs to the DXR family. The cofactor is Mg(2+). Mn(2+) is required as a cofactor.

It catalyses the reaction 2-C-methyl-D-erythritol 4-phosphate + NADP(+) = 1-deoxy-D-xylulose 5-phosphate + NADPH + H(+). It functions in the pathway isoprenoid biosynthesis; isopentenyl diphosphate biosynthesis via DXP pathway; isopentenyl diphosphate from 1-deoxy-D-xylulose 5-phosphate: step 1/6. In terms of biological role, catalyzes the NADPH-dependent rearrangement and reduction of 1-deoxy-D-xylulose-5-phosphate (DXP) to 2-C-methyl-D-erythritol 4-phosphate (MEP). The chain is 1-deoxy-D-xylulose 5-phosphate reductoisomerase from Bifidobacterium longum (strain DJO10A).